The following is a 130-amino-acid chain: Arsenate reductase 2.2 (130 aa).

Residues 18 to 119 (RDPRIAVVDV…WELSGRPVCR (102 aa)) enclose the Rhodanese domain. C70 (cysteine persulfide intermediate) is an active-site residue.

It catalyses the reaction [glutaredoxin]-dithiol + arsenate + glutathione + H(+) = glutathionyl-S-S-[glutaredoxin] + arsenite + H2O. In terms of biological role, possesses arsenate reductase activity in vitro. Catalyzes the reduction of arsenate [As(V)] to arsenite [As(III)]. May play a role in arsenic retention in roots. Its function is as follows. Possesses phosphatase activity towards p-nitrophenyl phosphate in vitro. In Oryza sativa subsp. japonica (Rice), this protein is Arsenate reductase 2.2 (ACR2.2).